A 331-amino-acid polypeptide reads, in one-letter code: Nucleotide sugar transporter SLC35B4 (331 aa).

11 helical membrane passes run 4–24 (ALAV…LELL), 30–50 (GCGN…GFLF), 59–79 (PAIP…VSVV), 92–112 (LHMI…IIIL), 117–137 (SIFK…CTFM), 153–173 (GFQA…ALLM), 201–221 (ALPL…AVLF), 229–249 (IPGI…NIIT), 251–267 (YVCI…CASL), 268–288 (TVTL…ILYF), and 291–311 (PFTL…LMYT). The Mediates endoplasmic reticulum retention motif lies at 326–331 (KDNKKN).

The protein belongs to the nucleotide-sugar transporter family. SLC35B subfamily.

The protein localises to the endoplasmic reticulum membrane. It carries out the reaction UDP-N-acetyl-alpha-D-glucosamine(in) + UDP-alpha-D-glucuronate(out) = UDP-N-acetyl-alpha-D-glucosamine(out) + UDP-alpha-D-glucuronate(in). The enzyme catalyses UDP-alpha-D-xylose(in) + UDP-alpha-D-glucuronate(out) = UDP-alpha-D-xylose(out) + UDP-alpha-D-glucuronate(in). Antiporter that transports nucleotide sugars across the endoplasmic reticulum (ER) membrane in exchange for another nucleotide sugar. May couple UDP-alpha-D-glucuronate (UDP-GlcA) or UDP-alpha-D-xylose (UDP-Xyl) efflux to UDP-alpha-D-glucuronate (UDP-GlcA) influx into the ER lumen, which in turn stimulates glucuronidation and excretion of endobiotics and xenobiotics. The protein is Nucleotide sugar transporter SLC35B4 (SLC35B4) of Macaca fascicularis (Crab-eating macaque).